A 695-amino-acid polypeptide reads, in one-letter code: Nucleoprotein (695 aa).

Coiled coils occupy residues 316–341 (VNVG…RRHE) and 372–400 (QTLA…EDQG). Disordered regions lie at residues 426-458 (RSIN…SFVD) and 472-611 (TLEN…EDTR). The span at 474 to 484 (ENSVMAPSTTL) shows a compositional bias: polar residues. Over residues 502–516 (ISQKKQGNESTDPAR) the composition is skewed to basic and acidic residues. Residues 529 to 547 (QEDDESEYTTDSQESDDQP) show a composition bias toward acidic residues. The short motif at 603–606 (PSAP) is the PTAP/PSAP motif element.

Belongs to the filoviruses nucleoprotein family. Homooligomer. Homomultimerizes to form the nucleocapsid. Binds to viral genomic RNA. Interacts with VP35 and VP30 to form the nucleocapsid. Also interacts with VP24 and VP40. In terms of processing, phosphorylated.

It is found in the virion. The protein resides in the host cytoplasm. In terms of biological role, encapsidates the genome, protecting it from nucleases. The encapsidated genomic RNA is termed the nucleocapsid and serves as template for transcription and replication. During replication, encapsidation by NP is coupled to RNA synthesis and all replicative products are resistant to nucleases. The sequence is that of Nucleoprotein (NP) from Lake Victoria marburgvirus (strain Ravn-87) (MARV).